Here is a 608-residue protein sequence, read N- to C-terminus: 1-deoxy-D-xylulose-5-phosphate synthase (608 aa).

Residues His80 and 121 to 123 (GHS) each bind thiamine diphosphate. Mg(2+) is bound at residue Asp152. Thiamine diphosphate is bound by residues 153-154 (GA), Asn181, Tyr282, and Glu357. Asn181 contacts Mg(2+).

It belongs to the transketolase family. DXPS subfamily. In terms of assembly, homodimer. The cofactor is Mg(2+). Thiamine diphosphate is required as a cofactor.

The catalysed reaction is D-glyceraldehyde 3-phosphate + pyruvate + H(+) = 1-deoxy-D-xylulose 5-phosphate + CO2. It participates in metabolic intermediate biosynthesis; 1-deoxy-D-xylulose 5-phosphate biosynthesis; 1-deoxy-D-xylulose 5-phosphate from D-glyceraldehyde 3-phosphate and pyruvate: step 1/1. In terms of biological role, catalyzes the acyloin condensation reaction between C atoms 2 and 3 of pyruvate and glyceraldehyde 3-phosphate to yield 1-deoxy-D-xylulose-5-phosphate (DXP). The polypeptide is 1-deoxy-D-xylulose-5-phosphate synthase (Buchnera aphidicola subsp. Acyrthosiphon pisum (strain 5A)).